We begin with the raw amino-acid sequence, 38 residues long: Cytochrome b6-f complex subunit 5 (38 aa).

Residues 5–25 (LLLGIVLGLIPVTLAGLFVAA) form a helical membrane-spanning segment.

It belongs to the PetG family. In terms of assembly, the 4 large subunits of the cytochrome b6-f complex are cytochrome b6, subunit IV (17 kDa polypeptide, PetD), cytochrome f and the Rieske protein, while the 4 small subunits are PetG, PetL, PetM and PetN. The complex functions as a dimer.

Its subcellular location is the cellular thylakoid membrane. Its function is as follows. Component of the cytochrome b6-f complex, which mediates electron transfer between photosystem II (PSII) and photosystem I (PSI), cyclic electron flow around PSI, and state transitions. PetG is required for either the stability or assembly of the cytochrome b6-f complex. The polypeptide is Cytochrome b6-f complex subunit 5 (Synechocystis sp. (strain ATCC 27184 / PCC 6803 / Kazusa)).